We begin with the raw amino-acid sequence, 290 residues long: Bifunctional protein FolD (290 aa).

NADP(+) contacts are provided by residues 164-166 (GRS), serine 193, and isoleucine 234.

It belongs to the tetrahydrofolate dehydrogenase/cyclohydrolase family. In terms of assembly, homodimer.

The catalysed reaction is (6R)-5,10-methylene-5,6,7,8-tetrahydrofolate + NADP(+) = (6R)-5,10-methenyltetrahydrofolate + NADPH. It carries out the reaction (6R)-5,10-methenyltetrahydrofolate + H2O = (6R)-10-formyltetrahydrofolate + H(+). It functions in the pathway one-carbon metabolism; tetrahydrofolate interconversion. Its function is as follows. Catalyzes the oxidation of 5,10-methylenetetrahydrofolate to 5,10-methenyltetrahydrofolate and then the hydrolysis of 5,10-methenyltetrahydrofolate to 10-formyltetrahydrofolate. This Cytophaga hutchinsonii (strain ATCC 33406 / DSM 1761 / CIP 103989 / NBRC 15051 / NCIMB 9469 / D465) protein is Bifunctional protein FolD.